Here is a 180-residue protein sequence, read N- to C-terminus: Cytokinin-beta-glucosidase 2 (180 aa).

In terms of biological role, hydrolyzes cytokinin glucosides thus liberating free cytokinins. This Panax ginseng (Korean ginseng) protein is Cytokinin-beta-glucosidase 2 (ROLC2).